The following is a 614-amino-acid chain: BTB/POZ domain-containing protein At5g48800 (614 aa).

The 69-residue stretch at 43–111 (SDITIEVNGG…CYGINFEITS (69 aa)) folds into the BTB domain. Positions 219–484 (DWWIEDLSVL…VQVLYFEQLK (266 aa)) constitute an NPH3 domain. Position 425 is a phosphotyrosine (Tyr-425). Disordered stretches follow at residues 492 to 525 (SYSD…KDNY) and 583 to 614 (GHSS…ASTD). Positions 507-521 (SWRINSGALSATMSP) are enriched in polar residues. Residues 522-562 (KDNYASLRRENRELKLELARLRMRLNDLEKEHICMKRDMQR) are a coiled coil. Over residues 583-597 (GHSSSRGSSSPSKQS) the composition is skewed to low complexity.

It belongs to the NPH3 family.

The protein operates within protein modification; protein ubiquitination. In terms of biological role, may act as a substrate-specific adapter of an E3 ubiquitin-protein ligase complex (CUL3-RBX1-BTB) which mediates the ubiquitination and subsequent proteasomal degradation of target proteins. The sequence is that of BTB/POZ domain-containing protein At5g48800 from Arabidopsis thaliana (Mouse-ear cress).